A 251-amino-acid polypeptide reads, in one-letter code: NADPH-dependent oxidoreductase (251 aa).

It belongs to the flavin oxidoreductase frp family. FMN is required as a cofactor.

In terms of biological role, reduces FMN, organic nitro compounds and disulfide DTNB. Involved in maintenance of the cellular redox state and the disulfide stress response. This chain is NADPH-dependent oxidoreductase (nfrA), found in Staphylococcus haemolyticus (strain JCSC1435).